Here is a 190-residue protein sequence, read N- to C-terminus: Threonylcarbamoyl-AMP synthase (190 aa).

The YrdC-like domain occupies 7-190 (LSSLIKCIRK…IVNGKLIRYV (184 aa)).

The protein belongs to the SUA5 family. TsaC subfamily.

The protein localises to the cytoplasm. The enzyme catalyses L-threonine + hydrogencarbonate + ATP = L-threonylcarbamoyladenylate + diphosphate + H2O. Required for the formation of a threonylcarbamoyl group on adenosine at position 37 (t(6)A37) in tRNAs that read codons beginning with adenine. Catalyzes the conversion of L-threonine, HCO(3)(-)/CO(2) and ATP to give threonylcarbamoyl-AMP (TC-AMP) as the acyladenylate intermediate, with the release of diphosphate. The polypeptide is Threonylcarbamoyl-AMP synthase (Buchnera aphidicola subsp. Schizaphis graminum (strain Sg)).